The primary structure comprises 112 residues: Cytochrome c (112 aa).

Heme c is bound by residues C23, C26, and H27. K81 bears the N6,N6,N6-trimethyllysine mark. M89 is a binding site for heme c. K95 is modified (N6,N6,N6-trimethyllysine).

The protein belongs to the cytochrome c family. Binds 1 heme c group covalently per subunit.

The protein localises to the mitochondrion intermembrane space. In terms of biological role, electron carrier protein. The oxidized form of the cytochrome c heme group can accept an electron from the heme group of the cytochrome c1 subunit of cytochrome reductase. Cytochrome c then transfers this electron to the cytochrome oxidase complex, the final protein carrier in the mitochondrial electron-transport chain. The protein is Cytochrome c (CC-1) of Arabidopsis thaliana (Mouse-ear cress).